A 486-amino-acid chain; its full sequence is Probable cytosol aminopeptidase (486 aa).

The protein belongs to the peptidase M17 family. It depends on Mn(2+) as a cofactor.

The protein localises to the cytoplasm. It carries out the reaction Release of an N-terminal amino acid, Xaa-|-Yaa-, in which Xaa is preferably Leu, but may be other amino acids including Pro although not Arg or Lys, and Yaa may be Pro. Amino acid amides and methyl esters are also readily hydrolyzed, but rates on arylamides are exceedingly low.. The catalysed reaction is Release of an N-terminal amino acid, preferentially leucine, but not glutamic or aspartic acids.. Functionally, presumably involved in the processing and regular turnover of intracellular proteins. Catalyzes the removal of unsubstituted N-terminal amino acids from various peptides. The sequence is that of Probable cytosol aminopeptidase (pepA) from Synechococcus elongatus (strain ATCC 33912 / PCC 7942 / FACHB-805) (Anacystis nidulans R2).